Consider the following 355-residue polypeptide: MRGERGSKPSVYSLFFDGVLTRTDPERAHHGAFRAIRAARPVLASRRTPGEQVTALGLTFPNVLGLAAGFDKNAVGIDALAALGFGHVEIGTVTGEPQPGNPKPRLFRLPEDRAIVNRMGFNNDGAEVVARRLAERSRGRDRLGHRSRPVLGVNIGKSKVVPDDDQAAVEADYEKSARLLAPYADYLVVNVSSPNTPGLRNLQAVEKLRPLLEHVRRTADAVTRTRVPLLVKIAPDLADEDVLGVADLALAIGLDGIIATNTTISRAGLRTPADRVGEIGAGGLSGRPLTGRALEVLRLLRERVGPDLTLVGVGGISTVQDARDRLTAGADLLQAYSAFVYEGPLWPRRIVRGVA.

Residues 68–72 (AGFDK) and Thr92 contribute to the FMN site. Lys72 contacts substrate. A substrate-binding site is contributed by 117–121 (NRMGF). FMN-binding residues include Asn154 and Asn190. Position 190 (Asn190) interacts with substrate. The active-site Nucleophile is the Ser193. Position 195 (Asn195) interacts with substrate. Positions 232 and 260 each coordinate FMN. Residue 261–262 (NT) coordinates substrate. FMN contacts are provided by residues Gly286, Gly315, and 336 to 337 (YS).

It belongs to the dihydroorotate dehydrogenase family. Type 2 subfamily. As to quaternary structure, monomer. Requires FMN as cofactor.

The protein resides in the cell membrane. It carries out the reaction (S)-dihydroorotate + a quinone = orotate + a quinol. The protein operates within pyrimidine metabolism; UMP biosynthesis via de novo pathway; orotate from (S)-dihydroorotate (quinone route): step 1/1. In terms of biological role, catalyzes the conversion of dihydroorotate to orotate with quinone as electron acceptor. The protein is Dihydroorotate dehydrogenase (quinone) of Nocardioides sp. (strain ATCC BAA-499 / JS614).